The chain runs to 360 residues: Ferredoxin--NADP reductase (360 aa).

Residues T25, E44, Q52, Y57, V97, F132, D298, and S339 each contribute to the FAD site.

This sequence belongs to the ferredoxin--NADP reductase type 2 family. In terms of assembly, homodimer. The cofactor is FAD.

The catalysed reaction is 2 reduced [2Fe-2S]-[ferredoxin] + NADP(+) + H(+) = 2 oxidized [2Fe-2S]-[ferredoxin] + NADPH. This chain is Ferredoxin--NADP reductase, found in Chlorobaculum tepidum (strain ATCC 49652 / DSM 12025 / NBRC 103806 / TLS) (Chlorobium tepidum).